A 255-amino-acid chain; its full sequence is uncharacterized protein (255 aa).

The first 23 residues, 1-23 (MKRLNTLVLYISFLILIISIVAG), serve as a signal peptide directing secretion. A lipid anchor (N-palmitoyl cysteine) is attached at cysteine 24. Residue cysteine 24 is the site of S-diacylglycerol cysteine attachment.

The protein belongs to the staphylococcal tandem lipoprotein family.

Its subcellular location is the cell membrane. This is an uncharacterized protein from Staphylococcus aureus (strain N315).